We begin with the raw amino-acid sequence, 431 residues long: Adenylosuccinate synthetase (431 aa).

Residues 13–19 (GDEGKGK) and 41–43 (GHT) contribute to the GTP site. Residue Asp-14 is the Proton acceptor of the active site. Asp-14 and Gly-41 together coordinate Mg(2+). IMP contacts are provided by residues 14-17 (DEGK), 39-42 (NAGH), Thr-130, Arg-144, Gln-225, Thr-240, and Arg-304. His-42 serves as the catalytic Proton donor. 300-306 (SVTGRPR) contributes to the substrate binding site. GTP contacts are provided by residues Arg-306, 332–334 (KLD), and 414–416 (STG).

Belongs to the adenylosuccinate synthetase family. In terms of assembly, homodimer. Mg(2+) is required as a cofactor.

It localises to the cytoplasm. The enzyme catalyses IMP + L-aspartate + GTP = N(6)-(1,2-dicarboxyethyl)-AMP + GDP + phosphate + 2 H(+). Its pathway is purine metabolism; AMP biosynthesis via de novo pathway; AMP from IMP: step 1/2. Plays an important role in the de novo pathway of purine nucleotide biosynthesis. Catalyzes the first committed step in the biosynthesis of AMP from IMP. This chain is Adenylosuccinate synthetase, found in Bordetella avium (strain 197N).